We begin with the raw amino-acid sequence, 429 residues long: Glutamate-1-semialdehyde 2,1-aminomutase 2 (429 aa).

Lysine 267 carries the post-translational modification N6-(pyridoxal phosphate)lysine.

Belongs to the class-III pyridoxal-phosphate-dependent aminotransferase family. HemL subfamily. In terms of assembly, homodimer. It depends on pyridoxal 5'-phosphate as a cofactor.

Its subcellular location is the cytoplasm. It catalyses the reaction (S)-4-amino-5-oxopentanoate = 5-aminolevulinate. The protein operates within porphyrin-containing compound metabolism; protoporphyrin-IX biosynthesis; 5-aminolevulinate from L-glutamyl-tRNA(Glu): step 2/2. The protein is Glutamate-1-semialdehyde 2,1-aminomutase 2 (gsaB) of Bacillus subtilis (strain 168).